The chain runs to 995 residues: Zinc finger protein ZFPM1 (995 aa).

Over residues 1 to 14 the composition is skewed to basic residues; it reads MSRRKQSNPRQIKR. Residues 1 to 103 are disordered; that stretch reads MSRRKQSNPR…EAAMASPWSG (103 aa). Residues 15–36 show a composition bias toward basic and acidic residues; the sequence is SLRDMEAGEEAKAMDSSPKEQE. Acidic residues-rich tracts occupy residues 67 to 78 and 86 to 95; these read SPEDPEDMEGQE and EEKEEKEEEA. Phosphoserine occurs at positions 99 and 143. The segment at 249–282 adopts a CCHC FOG-type 1 zinc-finger fold; that stretch reads VINKDVFPCKDCGIWYRSERNLQAHLLYYCASRQ. Zn(2+) is bound by residues Cys257, Cys260, His273, and Cys278. Ser286 bears the Phosphoserine mark. 3 C2H2-type zinc fingers span residues 303–327, 333–355, and 361–384; these read RVCP…MRSH, FVCL…LKVH, and GVCH…VTNH. The segment at 343-354 is interaction with TACC3; the sequence is TTKANCERHLKV. Phosphoserine is present on residues Ser397, Ser497, and Ser500. The segment at 424–526 is disordered; sequence PLVPADKAPT…SSPGPGELTM (103 aa). Over residues 509–525 the composition is skewed to low complexity; the sequence is ELSSPTPGSSPGPGELT. The CCHC FOG-type 2 zinc-finger motif lies at 584–617; the sequence is FSGTKGATCFECEITFNNINNFYVHKRLYCSGRR. Residues Cys592, Cys595, His608, and Cys613 each coordinate Zn(2+). Residues 616 to 694 form a disordered region; it reads RRAPEDPPTV…SVDDAEDDPS (79 aa). Over residues 630–652 the composition is skewed to low complexity; the sequence is AATGPARAPAGAAAEPDPSRSSP. Residues Ser651 and Ser684 each carry the phosphoserine modification. Residues 690 to 723 form a CCHC FOG-type 3 zinc finger; that stretch reads EDDPSRTLCEACNIRFSRHETYTVHKRYYCASRH. The Zn(2+) site is built by Cys698, Cys701, His714, and Cys719. A disordered region spans residues 721 to 827; the sequence is SRHDPPPRRP…PRRQSPDAPT (107 aa). Composition is skewed to pro residues over residues 728–740 and 764–779; these read RRPP…PGPA and GAPP…PVVP. Low complexity predominate over residues 785 to 800; the sequence is LPSSPRPGSASAGPAP. Ser803 carries the post-translational modification Phosphoserine. The interaction with CTBP2 stretch occupies residues 811–817; the sequence is PIDLSKR. Position 822 is a phosphoserine (Ser822). The CCHC FOG-type 4 zinc-finger motif lies at 830 to 863; that stretch reads PALADYHECTACRVSFHSLEAYLAHKKYSCPAAP. Residues Cys838, Cys841, His854, and Cys859 each contribute to the Zn(2+) site. The C2H2-type 4 zinc finger occupies 868-891; it reads ALCPYCPPNGRVRGDLVEHLRQAH. The tract at residues 892 to 960 is disordered; that stretch reads GLQVAKPAAS…APAPAPGGGG (69 aa). The span at 908 to 922 shows a compositional bias: basic and acidic residues; it reads TPAERAPRDSPDGRA. Phosphoserine is present on residues Ser925 and Ser927. A CCHC FOG-type 5 zinc finger spans residues 957 to 990; it reads GGGGGHRYCRLCNIRFSSLSTFIAHKKYYCSSHA. Residues Cys965, Cys968, His981, and Cys986 each contribute to the Zn(2+) site.

The protein belongs to the FOG (Friend of GATA) family. Interacts with the N-terminal zinc-finger of GATA1, GATA2 and GATA3. Interacts with corepressor CTBP2; this interaction is however not essential for corepressor activity in erythropoiesis. Interacts with TACC3. As to expression, mainly expressed in hematopoietic tissues. Expressed in the spleen, a primary site of hematopoiesis in the adult mouse, as well as in the liver and testis, but not in the heart, brain, lung, kidney, or skeletal muscle. Among hematopoietic cell lines, it is strongly expressed in erythroid and megakaryocytic cell lines. Expressed at low level in several lymphoid and early myeloid cell lines. Not expressed in mast cell and macrophage lines. Expressed in the heart, where it colocalizes with GATA4, GATA5 and GATA6.

It localises to the nucleus. Transcription regulator that plays an essential role in erythroid and megakaryocytic cell differentiation. Essential cofactor that acts via the formation of a heterodimer with transcription factors of the GATA family GATA1, GATA2 and GATA3. Such heterodimer can both activate or repress transcriptional activity, depending on the cell and promoter context. The heterodimer formed with GATA proteins is essential to activate expression of genes such as NFE2, ITGA2B, alpha- and beta-globin, while it represses expression of KLF1. May be involved in regulation of some genes in gonads. May also be involved in cardiac development, in a non-redundant way with ZFPM2/FOG2. This chain is Zinc finger protein ZFPM1 (Zfpm1), found in Mus musculus (Mouse).